The chain runs to 369 residues: CLIP domain-containing serine protease HP8 (369 aa).

Positions 1–24 are cleaved as a signal peptide; sequence MKTPFEKIRIISCILVIVSTNVVG. The propeptide occupies 25-81; it reads QKCNGGANCIPLEECTDLFQQLKQGNSPQLTRLLRGLHCGFEDLNSPKICCPPEFLA. Positions 26 to 75 constitute a Clip domain; it reads KCNGGANCIPLEECTDLFQQLKQGNSPQLTRLLRGLHCGFEDLNSPKICC. Cystine bridges form between Cys27/Cys74, Cys33/Cys63, Cys39/Cys75, Cys105/Cys239, Cys142/Cys158, Cys186/Cys191, Cys286/Cys303, and Cys313/Cys344. The Peptidase S1 domain occupies 113 to 368; the sequence is IFGGIQTEID…FMDWILSKLE (256 aa). Residue His157 is the Charge relay system of the active site. Positions 177, 179, 182, and 185 each coordinate Ca(2+). Asn179 carries an N-linked (GlcNAc...) asparagine glycan. The active-site Charge relay system is Asp219. Catalysis depends on Ser317, which acts as the Charge relay system.

This sequence belongs to the peptidase S1 family. CLIP subfamily. In terms of assembly, in the active form, heterodimer of a light chain and a heavy chain; disulfide-linked. Proteolytically cleaved for activation. Cleavage produces a light chain and a catalytic heavy chain which remains covalently associated probably through an interchain disulfide bond. In larvae, expressed in the fat body and hemocytes.

It localises to the secreted. It is found in the cytoplasm. With respect to regulation, inhibited by (p-amidinophenyl) methanesulfonyl fluoride, p-nitrophenyl-p'-guanidinobenzoate, D-phenylalanyl-L-prolyl-L-arginyl chloromethane, leupeptin, antipain and to a lesser extent by antithrombin III. Functionally, endopeptidase with selective post-Arg cleavage site. Functions in the innate immune response to fungal and Gram-positive bacterial infections. Upon pathogen infection promotes nodulation; a cellular defense response in which hemocytes surround and isolate invading pathogens forming aggregates called nodules. Involved in activating nodule formation in response to infection with M.luteus, E.coli or S.cerevisiae. Able to bind the microbes M.luteus, E.coli or S.cerevisiae. According to another report, does not bind microorganisms. This is CLIP domain-containing serine protease HP8 from Bombyx mori (Silk moth).